A 239-amino-acid polypeptide reads, in one-letter code: LexA repressor (239 aa).

Positions 1-40 (MTEAATGPEGADPSRAARSLPGRPPGIRADSSGLTDRQRR) are disordered. Positions 58–78 (MREIGQAVGLSSTSSVAHQLM) form a DNA-binding region, H-T-H motif. The span at 89 to 100 (DPHRPRAYEVRG) shows a compositional bias: basic and acidic residues. The tract at residues 89–116 (DPHRPRAYEVRGSDQPSAQPADTSGKPA) is disordered. Residues Ser163 and Lys200 each act as for autocatalytic cleavage activity in the active site.

This sequence belongs to the peptidase S24 family. Homodimer.

It carries out the reaction Hydrolysis of Ala-|-Gly bond in repressor LexA.. In terms of biological role, represses a number of genes involved in the response to DNA damage (SOS response), including recA and lexA. In the presence of single-stranded DNA, RecA interacts with LexA causing an autocatalytic cleavage which disrupts the DNA-binding part of LexA, leading to derepression of the SOS regulon and eventually DNA repair. This is LexA repressor from Streptomyces clavuligerus.